Here is a 445-residue protein sequence, read N- to C-terminus: UNC93-like protein MFSD11 (445 aa).

The chain crosses the membrane as a helical span at residues 8 to 28; the sequence is LLNIIILGIGFMFMFTAFQTS. The N-linked (GlcNAc...) asparagine glycan is linked to Asn40. The next 4 helical transmembrane spans lie at 53-73, 74-94, 98-118, and 138-158; these read AIIY…VAVI, GCQM…AMFI, TWSF…LWTA, and IFWA…YLAW. A glycan (N-linked (GlcNAc...) asparagine) is linked at Asn163. A run of 7 helical transmembrane segments spans residues 170 to 190, 239 to 259, 277 to 297, 309 to 329, 345 to 365, 385 to 405, and 415 to 435; these read RTVF…FFLI, MLLL…YSGV, LIGL…GLFG, PVVI…YLYM, AFIN…GLGD, APAF…AFFY, and LLIL…VEWG.

The protein belongs to the unc-93 family.

The protein resides in the membrane. This Xenopus tropicalis (Western clawed frog) protein is UNC93-like protein MFSD11 (mfsd11).